Reading from the N-terminus, the 681-residue chain is CAI-1 autoinducer sensor kinase/phosphatase CqsS (681 aa).

A run of 4 helical transmembrane segments spans residues 17-37, 73-93, 112-132, and 148-168; these read LVGW…EFMF, AYYQ…MLLM, ILLV…IGLA, and MDWT…LFYF. One can recognise a Histidine kinase domain in the interval 187 to 413; sequence GIAHEMRNPL…QFTMTFPTIG (227 aa). At His190 the chain carries Phosphohistidine; by autocatalysis. Residues 564-681 enclose the Response regulatory domain; the sequence is TIMVVDDNES…RLFDKIANWI (118 aa). At Asp613 the chain carries 4-aspartylphosphate.

It localises to the cell membrane. It catalyses the reaction ATP + protein L-histidine = ADP + protein N-phospho-L-histidine.. Functionally, senses the quorum-sensing autoinducer CAI-1 ((S)-3-hydroxytridecan-4-one) which probably functions as an intragenus signal. The sensory signal is then relayed to LuxU and LuxO. In Vibrio campbellii (strain ATCC BAA-1116), this protein is CAI-1 autoinducer sensor kinase/phosphatase CqsS (cqsS).